Here is a 91-residue protein sequence, read N- to C-terminus: Elongation factor 1-beta (91 aa).

Homodimer.

Promotes the exchange of GDP for GTP in EF-1-alpha/GDP, thus allowing the regeneration of EF-1-alpha/GTP that could then be used to form the ternary complex EF-1-alpha/GTP/AAtRNA. This is Elongation factor 1-beta (ef1b) from Saccharolobus solfataricus (strain ATCC 35092 / DSM 1617 / JCM 11322 / P2) (Sulfolobus solfataricus).